The chain runs to 146 residues: Snake venom vascular endothelial growth factor toxin (146 aa).

Residues 1–24 (MAAYLLAVAILFCIQGWPLGTVQG) form the signal peptide. Gln25 is subject to Pyrrolidone carboxylic acid. 3 disulfides stabilise this stretch: Cys38/Cys80, Cys69/Cys115, and Cys73/Cys117. The disordered stretch occupies residues 119 to 146 (PRSASGVNSRKHKRNPEEGEPRAKFPFV). Basic and acidic residues predominate over residues 133-146 (NPEEGEPRAKFPFV).

This sequence belongs to the PDGF/VEGF growth factor family. Snake venom VEGF subfamily. Homodimer; disulfide-linked. Interacts with VEGF receptor-1 (FLT1) with a high affinity, whereas it binds to VEGF receptor-2 (KDR) with a low affinity. Does not bind VEGF receptor-3 (FLT4). As to expression, expressed by the venom gland.

It is found in the secreted. Functionally, snake venom VEGFs may contribute to venom dispersion and prey subjugation by inducing vascular permeability and hypotension. This protein induces vascular permeability probably through VEGF (VEGFR) signaling. This protein also induces a drastic hypotensive effect after intravenous injection. The hypotension is mediated by nitric oxide (NO), which is produced by VEGF-activated endothelium NO synthase. Also induces angiogenesis in vitro. Like other crotalid VEGFs, this protein interacts with VEGF receptor-1 (FLT1) with a high affinity, whereas it binds to VEGF receptor-2 (KDR) with a low affinity. This is Snake venom vascular endothelial growth factor toxin from Bothrops insularis (Golden lancehead).